A 419-amino-acid polypeptide reads, in one-letter code: Variant surface glycoprotein YnAT 1.1 (419 aa).

The N-terminal stretch at 1–28 is a signal peptide; that stretch reads MKRVLSNVLKAWIFTIVAFHNFSTSVTA. N-linked (GlcNAc...) asparagine glycosylation is found at N82 and N358. Positions 369 to 405 are disordered; sequence ESSRPPSTDANTSQKGPLQRPEKSGESSHLPSGSSHG. Residues 372–384 are compositionally biased toward polar residues; sequence RPPSTDANTSQKG. N-linked (GlcNAc...) (high mannose) asparagine glycosylation occurs at N379. The span at 395-405 shows a compositional bias: low complexity; the sequence is SSHLPSGSSHG. Residue S400 is the site of GPI-anchor amidated serine attachment. Residues 401–419 constitute a propeptide, removed in mature form; it reads GSSHGTKAIRSILHVALLM.

The protein localises to the cell membrane. In terms of biological role, VSG forms a coat on the surface of the parasite. The trypanosome evades the immune response of the host by expressing a series of antigenically distinct VSGs from an estimated 1000 VSG genes. This Trypanosoma congolense protein is Variant surface glycoprotein YnAT 1.1.